Here is a 159-residue protein sequence, read N- to C-terminus: Ribosomal RNA large subunit methyltransferase H (159 aa).

Residues L76, G107, and 126–131 (LSKLTM) contribute to the S-adenosyl-L-methionine site.

Belongs to the RNA methyltransferase RlmH family. Homodimer.

Its subcellular location is the cytoplasm. The catalysed reaction is pseudouridine(1915) in 23S rRNA + S-adenosyl-L-methionine = N(3)-methylpseudouridine(1915) in 23S rRNA + S-adenosyl-L-homocysteine + H(+). Its function is as follows. Specifically methylates the pseudouridine at position 1915 (m3Psi1915) in 23S rRNA. This chain is Ribosomal RNA large subunit methyltransferase H, found in Acinetobacter baumannii (strain AB307-0294).